A 93-amino-acid chain; its full sequence is UPF0298 protein GWCH70_0997 (93 aa).

This sequence belongs to the UPF0298 family.

Its subcellular location is the cytoplasm. This is UPF0298 protein GWCH70_0997 from Geobacillus sp. (strain WCH70).